We begin with the raw amino-acid sequence, 575 residues long: Transcription factor ncaA (575 aa).

Polar residues-rich tracts occupy residues 1–15 and 22–34; these read MAETTPSRPNDTPEN and DNQSQSAGQSKNP. Disordered stretches follow at residues 1–40 and 79–114; these read MAETTPSRPNDTPENSPGGGDDNQSQSAGQSKNPASVKDR and IRSGITRRQARTSSGKRDTPERAMGKGPSEHFAGGE. The segment at 39 to 66 adopts a UBZ4-type; degenerate zinc-finger fold; sequence DRKCQYCHQAFTSSSLGRHLDQYLFKKK. The span at 93 to 102 shows a compositional bias: basic and acidic residues; the sequence is GKRDTPERAM. Positions 337–371 form a coiled coil; that stretch reads FAREVEKRKTLDEQLARVQQEANQLRAQVEKLGSC. The segment at 429-575 is disordered; it reads GRVGVGYGNP…ASGPPPSSGA (147 aa). Basic and acidic residues predominate over residues 440–454; the sequence is LDDRSSADTKARATE. The span at 455–471 shows a compositional bias: low complexity; sequence EPPASAALASTSTSAPP. Over residues 472-485 the composition is skewed to pro residues; it reads SAHPPPRALQPAPG. 2 stretches are compositionally biased toward polar residues: residues 493 to 513 and 538 to 558; these read DQSSSHTGGASAPSSQNTSPY and SAANPSATAPNTWNPHSHQSL.

Interacts with atrR.

It is found in the nucleus. Functionally, transcription factor required for normal voriconazole resistance. Contributes to the function of atrR and regulates the expression of the atrR target gene abcG1. The polypeptide is Transcription factor ncaA (Aspergillus fumigatus (strain ATCC MYA-4609 / CBS 101355 / FGSC A1100 / Af293) (Neosartorya fumigata)).